A 515-amino-acid polypeptide reads, in one-letter code: Maturase K (515 aa).

This sequence belongs to the intron maturase 2 family. MatK subfamily.

Its subcellular location is the plastid. The protein localises to the chloroplast. Usually encoded in the trnK tRNA gene intron. Probably assists in splicing its own and other chloroplast group II introns. This chain is Maturase K, found in Pinus tabuliformis (Chinese red pine).